The sequence spans 86 residues: Cell division topological specificity factor (86 aa).

This sequence belongs to the MinE family.

Functionally, prevents the cell division inhibition by proteins MinC and MinD at internal division sites while permitting inhibition at polar sites. This ensures cell division at the proper site by restricting the formation of a division septum at the midpoint of the long axis of the cell. This is Cell division topological specificity factor from Stenotrophomonas maltophilia (strain K279a).